Here is a 1070-residue protein sequence, read N- to C-terminus: Duffy receptor gamma form (1070 aa).

Residues 1–21 form the signal peptide; it reads MEGKKKRPLFFLLVLLLSHKA. Residues 22–1003 lie on the Extracellular side of the membrane; the sequence is NNVLFERMNG…SYECFTKGSS (982 aa). 2 N-linked (GlcNAc...) asparagine glycosylation sites follow: N134 and N179. 2 disulfides stabilise this stretch: C214–C243 and C227–C234. The short motif at 279-281 is the Cell attachment site element; sequence RGD. 4 disulfide bridges follow: C296-C372, C410-C427, C422-C502, and C431-C500. The interval 518–912 is disordered; that stretch reads VGSGVESKAP…LNNRKLNRDQ (395 aa). Over residues 526–541 the composition is skewed to polar residues; it reads APSSNPINEAVKSSSG. Basic and acidic residues-rich tracts occupy residues 544-559, 672-707, and 714-731; these read KVQEDSAHRSVNEGEG, GEVHNGTDTEPKEDGEKADPQKNIEVKGKQDTDDRS, and HTDERASLGETHMEKDTE. N676 carries N-linked (GlcNAc...) asparagine glycosylation. Residues 732–763 are compositionally biased toward polar residues; sequence TTGGSTLTPEQNVSVASDNGNVPGSGNKQNEG. The N-linked (GlcNAc...) asparagine glycan is linked to N743. The span at 766–776 shows a compositional bias: low complexity; the sequence is ALSGAESLESS. The N-linked (GlcNAc...) asparagine glycan is linked to N785. Basic and acidic residues predominate over residues 796–807; it reads GNEKDFQKHDFM. A compositionally biased stretch (low complexity) spans 814-863; it reads DQTSSDHTSSDQTSSDQTSSDQTSSDQTSSDQTSSDQTSSDQTSSDQTID. A compositionally biased stretch (basic and acidic residues) spans 864–888; the sequence is TEGHHRDNVRNPEIKSSEDMSKGDF. Over residues 890–906 the composition is skewed to polar residues; it reads RNSNSNELYSHNNLNNR. N936 carries N-linked (GlcNAc...) asparagine glycosylation. The helical transmembrane segment at 1004–1025 threads the bilayer; the sequence is TGIVYFATGGAFLIILLLFASW. The Cytoplasmic portion of the chain corresponds to 1026–1070; the sequence is NAASNDYEEEATFDEFEEYCYNIHRTPQMPNDIEHMQQFTPLDYS.

It is found in the membrane. In terms of biological role, binds to Neu5Gc-sialylated receptors on macaque erythrocytes. In Plasmodium knowlesi, this protein is Duffy receptor gamma form.